The sequence spans 114 residues: MFGACYKQPLKPSGSEPPAEECRMTPRHAGCDVTEMQRILSQPTFTEHLLRAVCTKLANMYSTSTDCREHCRRGMKAKQLKAEAGRSCQRKGVPIQTPREHSWISCKKEFEANP.

The tract at residues 1–24 (MFGACYKQPLKPSGSEPPAEECRM) is disordered.

As to expression, expressed in kidney and liver.

This is an uncharacterized protein from Homo sapiens (Human).